A 493-amino-acid polypeptide reads, in one-letter code: ATP synthase subunit beta, chloroplastic (493 aa).

170–177 contributes to the ATP binding site; it reads GGAGVGKT.

The protein belongs to the ATPase alpha/beta chains family. F-type ATPases have 2 components, CF(1) - the catalytic core - and CF(0) - the membrane proton channel. CF(1) has five subunits: alpha(3), beta(3), gamma(1), delta(1), epsilon(1). CF(0) has four main subunits: a(1), b(1), b'(1) and c(9-12).

It is found in the plastid. It localises to the chloroplast thylakoid membrane. It catalyses the reaction ATP + H2O + 4 H(+)(in) = ADP + phosphate + 5 H(+)(out). Produces ATP from ADP in the presence of a proton gradient across the membrane. The catalytic sites are hosted primarily by the beta subunits. The polypeptide is ATP synthase subunit beta, chloroplastic (Lachenalia pusilla (Cape cowslips)).